The chain runs to 607 residues: Fatty acid amide hydrolase (607 aa).

Active-site charge relay system residues include K204 and S280. Position 301 to 304 (301 to 304 (GGGS)) interacts with substrate. S304 acts as the Acyl-ester intermediate in catalysis.

Belongs to the amidase family. As to quaternary structure, forms homodimers.

The protein resides in the endoplasmic reticulum membrane. It localises to the cell membrane. It catalyses the reaction N-(9Z,12Z-octadecadienoyl)-ethanolamine + H2O = ethanolamine + (9Z,12Z)-octadecadienoate. Its function is as follows. Catalyzes the hydrolysis of bioactive endogenous fatty acid amides to their corresponding acids. The hydrolysis of endogenous amidated lipids terminates their participation as lipid mediators in various signaling systems. Converts a wide range of N-acylethanolamines (NAEs) to their corresponding free fatty acids and ethanolamine. In Medicago truncatula (Barrel medic), this protein is Fatty acid amide hydrolase.